Consider the following 998-residue polypeptide: Kinesin-like protein KIF19 (998 aa).

The 336-residue stretch at 11–346 (QLMVALRVRP…LTYAGRAKNI (336 aa)) folds into the Kinesin motor domain. Position 104–111 (104–111 (GPTGCGKT)) interacts with ATP. Coiled coils occupy residues 360–391 (HIAQ…RGQA) and 424–452 (EQLA…EVQI). Residues 482 to 494 (ECYAKDDSEKDSD) show a composition bias toward basic and acidic residues. The disordered stretch occupies residues 482-503 (ECYAKDDSEKDSDTGDDQPDIL). Residues 507-552 (EVAAARESIAALVDEQKQLRKQKLALEQRCRELRARGRRLEETLPR) are a coiled coil. 4 stretches are compositionally biased toward polar residues: residues 662-676 (SSLP…SLTP), 684-697 (KTLS…QNSA), 746-761 (SLGS…SENL), and 836-852 (TLQH…STGE). 4 disordered regions span residues 662-706 (SSLP…TESE), 746-765 (SLGS…SEIP), 794-911 (GTEG…THLL), and 948-998 (KLPP…SRHN). A compositionally biased stretch (basic and acidic residues) spans 989-998 (HGKDGCSRHN).

This sequence belongs to the TRAFAC class myosin-kinesin ATPase superfamily. Kinesin family.

It localises to the cytoplasm. The protein resides in the cytoskeleton. It is found in the cell projection. Its subcellular location is the cilium. In terms of biological role, plus end-directed microtubule-dependent motor protein that regulates the length of motile cilia by mediating depolymerization of microtubules at ciliary tips. This is Kinesin-like protein KIF19 (KIF19) from Homo sapiens (Human).